Consider the following 90-residue polypeptide: Small ribosomal subunit protein uS15 (90 aa).

It belongs to the universal ribosomal protein uS15 family. As to quaternary structure, part of the 30S ribosomal subunit. Forms a bridge to the 50S subunit in the 70S ribosome, contacting the 23S rRNA.

Its function is as follows. One of the primary rRNA binding proteins, it binds directly to 16S rRNA where it helps nucleate assembly of the platform of the 30S subunit by binding and bridging several RNA helices of the 16S rRNA. In terms of biological role, forms an intersubunit bridge (bridge B4) with the 23S rRNA of the 50S subunit in the ribosome. This Mycoplasmoides gallisepticum (strain R(low / passage 15 / clone 2)) (Mycoplasma gallisepticum) protein is Small ribosomal subunit protein uS15.